The sequence spans 538 residues: Probable cytochrome P450 309a2 (538 aa).

Cys-483 contacts heme.

This sequence belongs to the cytochrome P450 family. The cofactor is heme.

It localises to the endoplasmic reticulum membrane. The protein localises to the microsome membrane. Its function is as follows. May be involved in the metabolism of insect hormones and in the breakdown of synthetic insecticides. The protein is Probable cytochrome P450 309a2 (Cyp309a2) of Drosophila melanogaster (Fruit fly).